The primary structure comprises 391 residues: Cilia- and flagella-associated protein 263 (391 aa).

The tract at residues 1 to 21 (MTDDDSETSASETQAQEESDL) is disordered. 2 coiled-coil regions span residues 95–243 (LSVD…NQEL) and 294–369 (LRKE…LKGY).

This sequence belongs to the CFAP263 family. Forms a complex with CFAP184; the interaction is required for functional activity in cilia. Interacts with HAP1 and PCM1.

Its subcellular location is the cytoplasm. The protein localises to the cytoskeleton. The protein resides in the microtubule organizing center. It localises to the centrosome. It is found in the centriolar satellite. Its subcellular location is the cell projection. The protein localises to the cilium. Component of centriolar satellites contributing to primary cilium formation. In complex with CFAP263, acts as a regulator of ciliary beating that connects radial spoke 3 (RS3) to the inner dynein arm (IDA) and the nexin-dynein regulatory complex (N-DRC). The complex is positioned parallel to N-DRC and forms a connection between the arch at the base of RS3, the IDA tail and N-DRC. This chain is Cilia- and flagella-associated protein 263 (CFAP263), found in Bos taurus (Bovine).